Consider the following 262-residue polypeptide: Sperm microtubule inner protein 6 (262 aa).

The protein belongs to the SPMIP6 family. Microtubule inner protein component of sperm flagellar doublet microtubules. Interacts with alpha-tubulin.

The protein localises to the cytoplasm. Its subcellular location is the cytoskeleton. The protein resides in the nucleus. It localises to the mitochondrion. It is found in the flagellum axoneme. Functionally, may participate in intramanchette transport and midpiece formation of the sperm tail. May play a potential role in somatic cell proliferation. This is Sperm microtubule inner protein 6 (SPMIP6) from Macaca fascicularis (Crab-eating macaque).